The following is a 105-amino-acid chain: Small ribosomal subunit protein eS26 (105 aa).

Belongs to the eukaryotic ribosomal protein eS26 family. As to quaternary structure, component of the small ribosomal subunit.

It localises to the cytoplasm. The chain is Small ribosomal subunit protein eS26 (RPS26) from Encephalitozoon cuniculi (strain GB-M1) (Microsporidian parasite).